A 30-amino-acid chain; its full sequence is ARICPRILMKCKKDSDCLAECICQEHGFCG.

Cystine bridges form between C4/C21, C11/C23, and C17/C29.

Belongs to the protease inhibitor I7 (squash-type serine protease inhibitor) family.

It localises to the secreted. Its function is as follows. Strongly inhibits trypsin, weakly inhibits chymotrypsin. This chain is Trypsin inhibitor 7, found in Cyclanthera pedata (Achocha).